A 251-amino-acid polypeptide reads, in one-letter code: 3-deoxy-manno-octulosonate cytidylyltransferase (251 aa).

This sequence belongs to the KdsB family.

Its subcellular location is the cytoplasm. The catalysed reaction is 3-deoxy-alpha-D-manno-oct-2-ulosonate + CTP = CMP-3-deoxy-beta-D-manno-octulosonate + diphosphate. Its pathway is nucleotide-sugar biosynthesis; CMP-3-deoxy-D-manno-octulosonate biosynthesis; CMP-3-deoxy-D-manno-octulosonate from 3-deoxy-D-manno-octulosonate and CTP: step 1/1. The protein operates within bacterial outer membrane biogenesis; lipopolysaccharide biosynthesis. In terms of biological role, activates KDO (a required 8-carbon sugar) for incorporation into bacterial lipopolysaccharide in Gram-negative bacteria. The chain is 3-deoxy-manno-octulosonate cytidylyltransferase from Alcanivorax borkumensis (strain ATCC 700651 / DSM 11573 / NCIMB 13689 / SK2).